Here is a 422-residue protein sequence, read N- to C-terminus: UDP-N-acetylglucosamine 1-carboxyvinyltransferase (422 aa).

Residue Lys22–Asn23 coordinates phosphoenolpyruvate. Residue Arg94 participates in UDP-N-acetyl-alpha-D-glucosamine binding. Cys118 (proton donor) is an active-site residue. A 2-(S-cysteinyl)pyruvic acid O-phosphothioketal modification is found at Cys118. UDP-N-acetyl-alpha-D-glucosamine is bound by residues Arg123–Leu127, Asp309, and Ile331.

It belongs to the EPSP synthase family. MurA subfamily.

The protein localises to the cytoplasm. It carries out the reaction phosphoenolpyruvate + UDP-N-acetyl-alpha-D-glucosamine = UDP-N-acetyl-3-O-(1-carboxyvinyl)-alpha-D-glucosamine + phosphate. It functions in the pathway cell wall biogenesis; peptidoglycan biosynthesis. Functionally, cell wall formation. Adds enolpyruvyl to UDP-N-acetylglucosamine. In Cereibacter sphaeroides (strain ATCC 17029 / ATH 2.4.9) (Rhodobacter sphaeroides), this protein is UDP-N-acetylglucosamine 1-carboxyvinyltransferase.